Reading from the N-terminus, the 306-residue chain is Agmatinase (306 aa).

Positions 128, 151, 153, 155, 232, and 234 each coordinate Mn(2+).

It belongs to the arginase family. Agmatinase subfamily. Requires Mn(2+) as cofactor.

It catalyses the reaction agmatine + H2O = urea + putrescine. It participates in amine and polyamine biosynthesis; putrescine biosynthesis via agmatine pathway; putrescine from agmatine: step 1/1. Its function is as follows. Catalyzes the formation of putrescine from agmatine. The sequence is that of Agmatinase (speB) from Proteus mirabilis.